Here is a 337-residue protein sequence, read N- to C-terminus: DNA-directed RNA polymerase subunit alpha (337 aa).

The tract at residues 1-233 (MVREKVTVST…DLFIPFLHIE (233 aa)) is alpha N-terminal domain (alpha-NTD). The interval 265–337 (KKIALKSIFI…FVIDLAKNEF (73 aa)) is alpha C-terminal domain (alpha-CTD).

It belongs to the RNA polymerase alpha chain family. As to quaternary structure, in plastids the minimal PEP RNA polymerase catalytic core is composed of four subunits: alpha, beta, beta', and beta''. When a (nuclear-encoded) sigma factor is associated with the core the holoenzyme is formed, which can initiate transcription.

It is found in the plastid. The protein resides in the chloroplast. The enzyme catalyses RNA(n) + a ribonucleoside 5'-triphosphate = RNA(n+1) + diphosphate. Its function is as follows. DNA-dependent RNA polymerase catalyzes the transcription of DNA into RNA using the four ribonucleoside triphosphates as substrates. In Nicotiana tomentosiformis (Tobacco), this protein is DNA-directed RNA polymerase subunit alpha.